We begin with the raw amino-acid sequence, 398 residues long: Acetate kinase (398 aa).

Asparagine 8 is a binding site for Mg(2+). Lysine 15 is an ATP binding site. Residue arginine 89 coordinates substrate. Aspartate 146 functions as the Proton donor/acceptor in the catalytic mechanism. ATP contacts are provided by residues histidine 206–glycine 210, aspartate 283–arginine 285, and glycine 331–asparagine 335. A Mg(2+)-binding site is contributed by glutamate 383.

It belongs to the acetokinase family. As to quaternary structure, homodimer. The cofactor is Mg(2+). Mn(2+) serves as cofactor.

It localises to the cytoplasm. It catalyses the reaction acetate + ATP = acetyl phosphate + ADP. Its pathway is metabolic intermediate biosynthesis; acetyl-CoA biosynthesis; acetyl-CoA from acetate: step 1/2. Catalyzes the formation of acetyl phosphate from acetate and ATP. Can also catalyze the reverse reaction. The protein is Acetate kinase of Streptococcus pyogenes serotype M1.